We begin with the raw amino-acid sequence, 213 residues long: Putative amidate substrates transporter protein (213 aa).

The next 6 membrane-spanning stretches (helical) occupy residues 4–20 (VGLF…GLML), 32–48 (LNFF…TVLI), 56–72 (AVIF…FTYL), 116–132 (VIWL…FLLL), 146–162 (VAVA…AFLI), and 172–188 (LPAA…VVLA).

It belongs to the AmiS/UreI family.

It is found in the cell membrane. In terms of biological role, possible transporter that might be responsible for the adsorption of amidase substrates or release of their hydrolysis products. In Mycolicibacterium smegmatis (Mycobacterium smegmatis), this protein is Putative amidate substrates transporter protein.